A 149-amino-acid polypeptide reads, in one-letter code: Large ribosomal subunit protein bL9 (149 aa).

It belongs to the bacterial ribosomal protein bL9 family.

Binds to the 23S rRNA. In Ligilactobacillus salivarius (strain UCC118) (Lactobacillus salivarius), this protein is Large ribosomal subunit protein bL9.